Consider the following 689-residue polypeptide: MATSQRKILVTSALPYANGPIHLGHMLEYIQTDIWSRYQKLRGHECHYICADDAHGTPIMLKAQQLGLAPEEMIAQVNKEHQQDFADFNIAFDNYHSTHSDENRVLASDIYLKLRTNGYIKSKSISQLFDPEKSMFLPDRFVKGTCPKCKSPDQYGDNCDACGATYSPTELINPKSAVSGATPVMKDTEHFFFDLPAFEGMLKEWTRSGALQTEMANKLDEWFEQGLQQWDITRDAPYFGFEIPDAPGKYFYVWLDAPIGYMGSFKNLCDKRPELSFDEFWAKDSKAEVYHFIGKDIVYFHSLFWPAMLHGSGYRQPNSVYAHGYVTVNGAKMSKSKGTFIKARTYLDHLDPEYLRYYYAAKLSSRIDDLDLNLEDFAQRVNSDLVGKLVNLASRTAGFITKRFDGKLAKIADTTLTEAFLAKQEQIAEFYETREYGKAMREIMALADIANGFVADAAPWQMVKQDDQQEAAHQVCSNALNLFRILVTYLKPVLPRLAQDVEAFFQQTLTWDGLAQDMAGHEISPFKAMMQRVELDKVNAMVADSKENLQVTADVPKTAKPEKTVESSNVSSEPLVDDPISETINFDDFAKIDLRIARIVKAEHVAEADKLLKLQLDIGGETRQVFAGIKSAYSPEDLEGKLTVMVANLAPRKMRFGMSEGMVLAAGPGGSDLWILEPHEGAQPGMRVK.

A 'HIGH' region motif is present at residues 15-25 (PYANGPIHLGH). The Zn(2+) site is built by Cys-146, Cys-149, Cys-159, and Cys-162. Positions 332–336 (KMSKS) match the 'KMSKS' region motif. ATP is bound at residue Lys-335. Residues 588 to 689 (DFAKIDLRIA…EGAQPGMRVK (102 aa)) enclose the tRNA-binding domain.

The protein belongs to the class-I aminoacyl-tRNA synthetase family. MetG type 1 subfamily. As to quaternary structure, homodimer. Requires Zn(2+) as cofactor.

The protein localises to the cytoplasm. It catalyses the reaction tRNA(Met) + L-methionine + ATP = L-methionyl-tRNA(Met) + AMP + diphosphate. Functionally, is required not only for elongation of protein synthesis but also for the initiation of all mRNA translation through initiator tRNA(fMet) aminoacylation. The sequence is that of Methionine--tRNA ligase from Shewanella sp. (strain W3-18-1).